The primary structure comprises 454 residues: Guanine deaminase (454 aa).

H82 and H84 together coordinate Zn(2+). Residues H84 to Q87, R213 to F214, H240 to E243, and D330 contribute to the substrate site. H240 and D330 together coordinate Zn(2+). S453 carries the post-translational modification Phosphoserine.

The protein belongs to the metallo-dependent hydrolases superfamily. ATZ/TRZ family. Homodimer. Requires Zn(2+) as cofactor.

The catalysed reaction is guanine + H2O + H(+) = xanthine + NH4(+). It functions in the pathway purine metabolism; guanine degradation; xanthine from guanine: step 1/1. Catalyzes the hydrolytic deamination of guanine, producing xanthine and ammonia. This Mus musculus (Mouse) protein is Guanine deaminase.